The chain runs to 533 residues: Putative sel1-like repeat-containing protein L21 (533 aa).

Sel1-like repeat units follow at residues 105–140 (VLSQ…NQGL), 141–172 (SFAQ…QSGY), 173–206 (YLSN…NQGC), 207–242 (NISQ…KQGN), and 243–278 (YFSQ…NCGH).

This Acanthamoeba polyphaga mimivirus (APMV) protein is Putative sel1-like repeat-containing protein L21.